The following is a 348-amino-acid chain: Chaperone protein DnaJ (348 aa).

The 63-residue stretch at 3–65 folds into the J domain; the sequence is DLYGILGVDH…EQRQRYDRHV (63 aa). A CR-type zinc finger spans residues 109–191; that stretch reads GGSQVVKIDS…CYGNGSRSAP (83 aa). Residues C122, C125, C139, C142, C165, C168, C179, and C182 each contribute to the Zn(2+) site. CXXCXGXG motif repeat units follow at residues 122-129, 139-146, 165-172, and 179-186; these read CDVCNGTR, CFDCNGSG, CSKCRGNG, and CRRCYGNG.

It belongs to the DnaJ family. In terms of assembly, homodimer. Requires Zn(2+) as cofactor.

It localises to the cytoplasm. Its function is as follows. Participates actively in the response to hyperosmotic and heat shock by preventing the aggregation of stress-denatured proteins and by disaggregating proteins, also in an autonomous, DnaK-independent fashion. Unfolded proteins bind initially to DnaJ; upon interaction with the DnaJ-bound protein, DnaK hydrolyzes its bound ATP, resulting in the formation of a stable complex. GrpE releases ADP from DnaK; ATP binding to DnaK triggers the release of the substrate protein, thus completing the reaction cycle. Several rounds of ATP-dependent interactions between DnaJ, DnaK and GrpE are required for fully efficient folding. Also involved, together with DnaK and GrpE, in the DNA replication of plasmids through activation of initiation proteins. In Tropheryma whipplei (strain Twist) (Whipple's bacillus), this protein is Chaperone protein DnaJ.